Consider the following 96-residue polypeptide: MNIRPLHDRVIVERQEVESKSAGGIVLTGSAAEKSTRGVVLAVGKGRILENGTVQPLDVKVGDTVIFAESYGTKTEKIDGKEVLIMSENDIMAIVD.

This sequence belongs to the GroES chaperonin family. In terms of assembly, heptamer of 7 subunits arranged in a ring. Interacts with the chaperonin GroEL.

It is found in the cytoplasm. Its function is as follows. Together with the chaperonin GroEL, plays an essential role in assisting protein folding. The GroEL-GroES system forms a nano-cage that allows encapsulation of the non-native substrate proteins and provides a physical environment optimized to promote and accelerate protein folding. GroES binds to the apical surface of the GroEL ring, thereby capping the opening of the GroEL channel. The chain is Co-chaperonin GroES 1 from Vibrio vulnificus (strain CMCP6).